The following is a 581-amino-acid chain: Major facilitator superfamily multidrug transporter NAG4 (581 aa).

Positions 1–14 are enriched in polar residues; that stretch reads MSHATDSTLDNASV. A disordered region spans residues 1-43; the sequence is MSHATDSTLDNASVDSEKVRDFGDDLQNHPVQPTRSILSKIRS. The N-linked (GlcNAc...) asparagine glycan is linked to N11. The segment covering 15-27 has biased composition (basic and acidic residues); that stretch reads DSEKVRDFGDDLQ. N125 carries N-linked (GlcNAc...) asparagine glycosylation. Helical transmembrane passes span 132-152, 169-189, 199-219, 230-250, 261-281, 290-310, 365-385, 403-423, 447-467, 471-491, 510-530, and 544-564; these read WLYT…SAIV, VIIL…PLVF, KPIY…CGAA, LIDG…LADI, AIFS…GGLL, WIYW…IAIV, IVFL…MFFF, GVMF…APFF, LIPM…FAWS, WVSW…FCCL, ALAA…LFTI, and LMAF…FFGA.

It belongs to the major facilitator superfamily. DHA1 family. Polyamines/proton antiporter (TC 2.A.1.2.16) subfamily.

Its subcellular location is the cell membrane. MFS transporter involved in N-acetylglucosamine (GlcNAc) uptake. Confers resistance to cycloheximide, 4-nitroquinoline-N-oxide, and 1,10-phenanthroline, and contributes to virulence. The protein is Major facilitator superfamily multidrug transporter NAG4 of Candida albicans (strain SC5314 / ATCC MYA-2876) (Yeast).